Consider the following 99-residue polypeptide: Acylphosphatase-2 (99 aa).

Position 2 is an N-acetylserine (S2). Residues 9–99 (SVDYEVFGRV…LEYSSFNIRY (91 aa)) form the Acylphosphatase-like domain. Catalysis depends on residues R24 and N42. S93 bears the Phosphoserine mark.

This sequence belongs to the acylphosphatase family.

The catalysed reaction is an acyl phosphate + H2O = a carboxylate + phosphate + H(+). Its physiological role is not yet clear. This is Acylphosphatase-2 (ACYP2) from Bos taurus (Bovine).